We begin with the raw amino-acid sequence, 321 residues long: Acetyl-coenzyme A carboxylase carboxyl transferase subunit alpha (321 aa).

The CoA carboxyltransferase C-terminal domain maps to 37–298 (DLDDEIKRLQ…KQRILSDLED (262 aa)).

This sequence belongs to the AccA family. As to quaternary structure, acetyl-CoA carboxylase is a heterohexamer composed of biotin carboxyl carrier protein (AccB), biotin carboxylase (AccC) and two subunits each of ACCase subunit alpha (AccA) and ACCase subunit beta (AccD).

Its subcellular location is the cytoplasm. The enzyme catalyses N(6)-carboxybiotinyl-L-lysyl-[protein] + acetyl-CoA = N(6)-biotinyl-L-lysyl-[protein] + malonyl-CoA. The protein operates within lipid metabolism; malonyl-CoA biosynthesis; malonyl-CoA from acetyl-CoA: step 1/1. Component of the acetyl coenzyme A carboxylase (ACC) complex. First, biotin carboxylase catalyzes the carboxylation of biotin on its carrier protein (BCCP) and then the CO(2) group is transferred by the carboxyltransferase to acetyl-CoA to form malonyl-CoA. This Mannheimia succiniciproducens (strain KCTC 0769BP / MBEL55E) protein is Acetyl-coenzyme A carboxylase carboxyl transferase subunit alpha.